Here is a 355-residue protein sequence, read N- to C-terminus: Putative beta-lactamase HcpE (355 aa).

An N-terminal signal peptide occupies residues Met-1–Leu-22. TPR repeat units lie at residues Asp-27 to Glu-60, Thr-63 to Glu-96, Cys-98 to Pro-131, Glu-132 to Lys-166, Gly-202 to Gly-240, Leu-245 to Ala-275, Val-276 to Glu-311, and Val-312 to Gln-344. Cystine bridges form between Cys-54–Cys-62, Cys-90–Cys-98, Cys-126–Cys-134, Cys-160–Cys-168, Cys-197–Cys-205, Cys-234–Cys-242, Cys-270–Cys-278, Cys-306–Cys-314, and Cys-338–Cys-346.

The protein belongs to the hcp beta-lactamase family.

The protein localises to the secreted. It carries out the reaction a beta-lactam + H2O = a substituted beta-amino acid. In terms of biological role, may hydrolyze 6-aminopenicillinic acid and 7-aminocephalosporanic acid (ACA) derivatives. This Helicobacter pylori (strain ATCC 700392 / 26695) (Campylobacter pylori) protein is Putative beta-lactamase HcpE (hcpE).